The primary structure comprises 710 residues: Polyribonucleotide nucleotidyltransferase (710 aa).

Residues Asp-501 and Asp-507 each coordinate Mg(2+). Residues 568-628 enclose the KH domain; sequence PKVQMFQIKP…ETVKQAILFI (61 aa). Residues 638–710 enclose the S1 motif domain; that stretch reads NSIYHAHISR…RIDFVLISKK (73 aa).

This sequence belongs to the polyribonucleotide nucleotidyltransferase family. Mg(2+) is required as a cofactor.

The protein localises to the cytoplasm. It catalyses the reaction RNA(n+1) + phosphate = RNA(n) + a ribonucleoside 5'-diphosphate. Involved in mRNA degradation. Catalyzes the phosphorolysis of single-stranded polyribonucleotides processively in the 3'- to 5'-direction. This chain is Polyribonucleotide nucleotidyltransferase, found in Phytoplasma australiense.